The sequence spans 533 residues: T-complex protein 1 subunit delta (533 aa).

A disordered region spans residues 1 to 24; the sequence is MVVKPAARGMKPQGQAYKDKSKPA.

This sequence belongs to the TCP-1 chaperonin family. Heterooligomeric complex of about 850 to 900 kDa that forms two stacked rings, 12 to 16 nm in diameter.

The protein localises to the cytoplasm. Its function is as follows. Molecular chaperone; assists the folding of proteins upon ATP hydrolysis. Known to play a role, in vitro, in the folding of actin and tubulin. This is T-complex protein 1 subunit delta from Ochlerotatus triseriatus (Eastern treehole mosquito).